Consider the following 155-residue polypeptide: Small ribosomal subunit protein uS7c (155 aa).

The protein belongs to the universal ribosomal protein uS7 family. Part of the 30S ribosomal subunit.

It localises to the plastid. It is found in the chloroplast. One of the primary rRNA binding proteins, it binds directly to 16S rRNA where it nucleates assembly of the head domain of the 30S subunit. This chain is Small ribosomal subunit protein uS7c (rps7), found in Ginkgo biloba (Ginkgo).